The primary structure comprises 396 residues: Deoxyuridine 5'-triphosphate nucleotidohydrolase (396 aa).

Substrate is bound by residues 280 to 282 (RSS) and 380 to 381 (FG).

This sequence belongs to the dUTPase family. Mg(2+) is required as a cofactor.

The catalysed reaction is dUTP + H2O = dUMP + diphosphate + H(+). Functionally, involved in nucleotide metabolism: produces dUMP, the immediate precursor of thymidine nucleotides and decreases the intracellular concentration of dUTP to avoid uracil incorporation into viral DNA. This is Deoxyuridine 5'-triphosphate nucleotidohydrolase from Varicella-zoster virus (strain Dumas) (HHV-3).